A 121-amino-acid polypeptide reads, in one-letter code: MSQKQEEENPAEETGEEKQDTQEKEGILPEKAEEAKLKAKYPSLGQKPGGSDFLMKRLQKGQKYFDSGDYNMAKAKMKNKQLPSAGPDKNLVTGDHIPTPQDLPQRKSSLVTSKLAGGQVE.

The tract at residues 1-53 is disordered; that stretch reads MSQKQEEENPAEETGEEKQDTQEKEGILPEKAEEAKLKAKYPSLGQKPGGSDF. An N-acetylserine modification is found at S2. Phosphoserine is present on S2. Residues 16 to 37 show a composition bias toward basic and acidic residues; that stretch reads EEKQDTQEKEGILPEKAEEAKL. T21 carries the phosphothreonine modification. Position 43 is a phosphoserine (S43). The residue at position 67 (S67) is a Phosphoserine; by GWL. The tract at residues 79-121 is disordered; sequence NKQLPSAGPDKNLVTGDHIPTPQDLPQRKSSLVTSKLAGGQVE. S109 carries the phosphoserine; by PKA modification.

It belongs to the endosulfine family. Interacts (when phosphorylated at Ser-67) with PPP2R2D. Interacts with ABCC8. Interacts with SNCA; interaction is disrupted when phosphorylated at Ser-109. Post-translationally, phosphorylation at Ser-67 by GWL during mitosis is essential for interaction with PPP2R2D (PR55-delta) and subsequent inactivation of PP2A. Phosphorylated by PKA.

It localises to the cytoplasm. In terms of biological role, protein phosphatase inhibitor that specifically inhibits protein phosphatase 2A (PP2A) during mitosis. When phosphorylated at Ser-67 during mitosis, specifically interacts with PPP2R2D (PR55-delta) and inhibits its activity, leading to inactivation of PP2A, an essential condition to keep cyclin-B1-CDK1 activity high during M phase. Also acts as a stimulator of insulin secretion by interacting with sulfonylurea receptor (ABCC8), thereby preventing sulfonylurea from binding to its receptor and reducing K(ATP) channel currents. The protein is Alpha-endosulfine (ENSA) of Bos taurus (Bovine).